The following is a 530-amino-acid chain: Chitin synthase 1 (530 aa).

A glycan (N-linked (GlcNAc...) asparagine) is linked at asparagine 17. The segment at 22–94 (QESSSNLIQQ…QANNNRKVTR (73 aa)) is disordered. A compositionally biased stretch (polar residues) spans 24–56 (SSSNLIQQQQPGTNYARNQQTLSSLRSQKQQAE). 3 N-linked (GlcNAc...) asparagine glycosylation sites follow: asparagine 118, asparagine 310, and asparagine 474. The next 2 membrane-spanning stretches (helical) occupy residues 477-497 (FFAG…GHGF) and 508-528 (IYNV…LSFL).

It belongs to the chitin synthase family. Class II subfamily.

The protein resides in the cell membrane. The catalysed reaction is [(1-&gt;4)-N-acetyl-beta-D-glucosaminyl](n) + UDP-N-acetyl-alpha-D-glucosamine = [(1-&gt;4)-N-acetyl-beta-D-glucosaminyl](n+1) + UDP + H(+). Its function is as follows. Polymerizes chitin, a structural polymer of the cell wall and septum, by transferring the sugar moiety of UDP-GlcNAc to the non-reducing end of the growing chitin polymer. In Rhizopus delemar (strain RA 99-880 / ATCC MYA-4621 / FGSC 9543 / NRRL 43880) (Mucormycosis agent), this protein is Chitin synthase 1.